Reading from the N-terminus, the 237-residue chain is Probable GTP-binding protein EngB (237 aa).

Residues Ala23 to Leu209 enclose the EngB-type G domain. Residues Gly31–Ser38, Gly58–His62, Asp82–Gly85, Thr149–Asp152, and Leu187–Ser190 each bind GTP. Mg(2+) contacts are provided by Ser38 and Thr60. The interval Lys214–Ala237 is disordered. The span at Pro227–Ala237 shows a compositional bias: pro residues.

The protein belongs to the TRAFAC class TrmE-Era-EngA-EngB-Septin-like GTPase superfamily. EngB GTPase family. Mg(2+) serves as cofactor.

Necessary for normal cell division and for the maintenance of normal septation. This is Probable GTP-binding protein EngB from Cupriavidus taiwanensis (strain DSM 17343 / BCRC 17206 / CCUG 44338 / CIP 107171 / LMG 19424 / R1) (Ralstonia taiwanensis (strain LMG 19424)).